A 42-amino-acid chain; its full sequence is Large ribosomal subunit protein eL32 (42 aa).

Belongs to the eukaryotic ribosomal protein eL32 family.

This chain is Large ribosomal subunit protein eL32 (RPL32), found in Zea mays (Maize).